Here is a 110-residue protein sequence, read N- to C-terminus: Insulin (110 aa).

A signal peptide spans 1-24; it reads MALWMRLLPLLALLALWGPDPAQA. 3 disulfide bridges follow: C31/C96, C43/C109, and C95/C100. A propeptide spans 57–87 (c peptide); sequence EAEDLQVGQVELGGGPGAGSLQPLALEGSLQ.

It belongs to the insulin family. Heterodimer of a B chain and an A chain linked by two disulfide bonds.

The protein localises to the secreted. Insulin decreases blood glucose concentration. It increases cell permeability to monosaccharides, amino acids and fatty acids. It accelerates glycolysis, the pentose phosphate cycle, and glycogen synthesis in liver. In Pongo pygmaeus (Bornean orangutan), this protein is Insulin (INS).